Consider the following 607-residue polypeptide: Guanine nucleotide-binding protein-like 1 (607 aa).

Over residues 1-14 the composition is skewed to basic residues; that stretch reads MPRKKPFSVKQKKK. Residues 1–81 form a disordered region; that stretch reads MPRKKPFSVK…GPRGYDPNRY (81 aa). Positions 15–26 are enriched in basic and acidic residues; that stretch reads QLQDKRERKRGL. Phosphoserine occurs at positions 32, 33, and 34. Phosphothreonine is present on residues Thr48 and Thr50. Ser51 and Ser68 each carry phosphoserine. The 241-residue stretch at 178–418 folds into the CP-type G domain; sequence WRQLWRVLEM…LCDCPGLIFP (241 aa). Residue 225–228 participates in GTP binding; the sequence is NKVD. At Ser324 the chain carries Phosphoserine. Residues 367-374 and 411-415 each bind GTP; these read GFPNVGKS and DCPGL. The segment at 544 to 607 is disordered; it reads GRVGPAGDEE…PYALLGEDEC (64 aa). Residues 550–585 show a composition bias toward acidic residues; that stretch reads GDEEEEEEEELSSSCEEEGEEDRDADEEGEGDEDTP. 3 positions are modified to phosphoserine: Ser561, Ser562, and Ser563.

It belongs to the TRAFAC class YlqF/YawG GTPase family.

Its function is as follows. Possible regulatory or functional link with the histocompatibility cluster. This is Guanine nucleotide-binding protein-like 1 (Gnl1) from Mus musculus (Mouse).